The primary structure comprises 342 residues: Paired box protein Pax-9 (342 aa).

The paired DNA-binding region spans 4 to 130; the sequence is AFGEVNQLGG…SSISRILRNK (127 aa). Residues 7-63 are PAI subdomain; it reads EVNQLGGVFVNGRPLPNAIRLRIVELAQLGIRPCDISRQLRVSHGCVSKILARYNET. An RED subdomain region spans residues 82–130; the sequence is TVVKHIRTYKQRDPGIFAWEIRDRLLADGVCDKYNVPSVSSISRILRNK. Residues 168-189 are interaction with KDM5B; sequence AAAAKVPTPPGVPAIPGSVALP.

In terms of assembly, interacts with KDM5B.

Its subcellular location is the nucleus. In terms of biological role, transcription factor required for normal development of thymus, parathyroid glands, ultimobranchial bodies, teeth, skeletal elements of skull and larynx as well as distal limbs. This Rattus norvegicus (Rat) protein is Paired box protein Pax-9.